We begin with the raw amino-acid sequence, 352 residues long: Small ribosomal subunit biogenesis GTPase RsgA (352 aa).

Residues 1-21 show a composition bias toward basic residues; the sequence is MKKNKLSKNQHRRIQAHHQYR. Positions 1 to 38 are disordered; sequence MKKNKLSKNQHRRIQAHHQYRLHPTSLTDDKNNQLDDA. The CP-type G domain maps to 116–278; sequence FYDGIKPMAA…LIDSPGIREF (163 aa). GTP contacts are provided by residues 164-167 and 218-226; these read NKID and GQSGVGKSS. Zn(2+) is bound by residues cysteine 302, cysteine 307, histidine 309, and cysteine 315.

This sequence belongs to the TRAFAC class YlqF/YawG GTPase family. RsgA subfamily. In terms of assembly, monomer. Associates with 30S ribosomal subunit, binds 16S rRNA. The cofactor is Zn(2+).

The protein localises to the cytoplasm. One of several proteins that assist in the late maturation steps of the functional core of the 30S ribosomal subunit. Helps release RbfA from mature subunits. May play a role in the assembly of ribosomal proteins into the subunit. Circularly permuted GTPase that catalyzes slow GTP hydrolysis, GTPase activity is stimulated by the 30S ribosomal subunit. The chain is Small ribosomal subunit biogenesis GTPase RsgA from Hamiltonella defensa subsp. Acyrthosiphon pisum (strain 5AT).